Consider the following 365-residue polypeptide: DNA polymerase IV (365 aa).

The UmuC domain occupies 14–198; it reads IIHIDMDAFF…LPIEKFHGVG (185 aa). Mg(2+)-binding residues include Asp18 and Asp116. Residue Glu117 is part of the active site.

This sequence belongs to the DNA polymerase type-Y family. In terms of assembly, monomer. It depends on Mg(2+) as a cofactor.

The protein localises to the cytoplasm. The catalysed reaction is DNA(n) + a 2'-deoxyribonucleoside 5'-triphosphate = DNA(n+1) + diphosphate. Poorly processive, error-prone DNA polymerase involved in untargeted mutagenesis. Copies undamaged DNA at stalled replication forks, which arise in vivo from mismatched or misaligned primer ends. These misaligned primers can be extended by PolIV. Exhibits no 3'-5' exonuclease (proofreading) activity. May be involved in translesional synthesis, in conjunction with the beta clamp from PolIII. This Streptococcus pyogenes serotype M3 (strain ATCC BAA-595 / MGAS315) protein is DNA polymerase IV.